Consider the following 166-residue polypeptide: Myosin regulatory light chain 2, ventricular/cardiac muscle isoform (166 aa).

Position 2 is a n,N,N-trimethylalanine (Ala-2). Phosphoserine; by MLCK occurs at positions 14 and 15. Ser-19 carries the post-translational modification Phosphoserine. EF-hand domains are found at residues 24–59 (TQIQ…LGRV), 94–129 (DPEE…QAER), and 130–165 (FSKE…GEEK). Asp-37, Asn-39, Asp-41, and Asp-48 together coordinate Ca(2+). Thr-52 is modified (phosphothreonine).

As to quaternary structure, myosin is a hexamer of 2 heavy chains and 4 light chains. Interacts with MYOC. N-terminus is methylated by METTL11A/NTM1. In terms of processing, phosphorylated by MYLK3 and MYLK2; promotes cardiac muscle contraction and function. Dephosphorylated by PPP1CB complexed to PPP1R12B. The phosphorylated form in adult is expressed as gradients across the heart from endocardium (low phosphorylation) to epicardium (high phosphorylation); regulates cardiac torsion and workload distribution. In terms of tissue distribution, abundantly expressed in both cardiac and slow skeletal muscle. In the adult heart, the phosphorylated form is highly expressed in epicardium and weakly in endocardium.

The protein resides in the cytoplasm. It localises to the myofibril. The protein localises to the sarcomere. It is found in the a band. Its function is as follows. Contractile protein that plays a role in heart development and function. Following phosphorylation, plays a role in cross-bridge cycling kinetics and cardiac muscle contraction by increasing myosin lever arm stiffness and promoting myosin head diffusion; as a consequence of the increase in maximum contraction force and calcium sensitivity of contraction force. These events altogether slow down myosin kinetics and prolong duty cycle resulting in accumulated myosins being cooperatively recruited to actin binding sites to sustain thin filament activation as a means to fine-tune myofilament calcium sensitivity to force. During cardiogenesis plays an early role in cardiac contractility by promoting cardiac myofibril assembly. The chain is Myosin regulatory light chain 2, ventricular/cardiac muscle isoform from Mus musculus (Mouse).